The primary structure comprises 331 residues: Pantothenate kinase (331 aa).

Position 109–116 (109–116 (GSVAVGKS)) interacts with ATP.

This sequence belongs to the prokaryotic pantothenate kinase family.

It localises to the cytoplasm. It catalyses the reaction (R)-pantothenate + ATP = (R)-4'-phosphopantothenate + ADP + H(+). Its pathway is cofactor biosynthesis; coenzyme A biosynthesis; CoA from (R)-pantothenate: step 1/5. This Sinorhizobium fredii (strain NBRC 101917 / NGR234) protein is Pantothenate kinase.